A 453-amino-acid polypeptide reads, in one-letter code: Cytochrome b-c1 complex subunit 2, mitochondrial (453 aa).

The N-terminal 14 residues, M1–Y14, are a transit peptide targeting the mitochondrion. An N6-acetyllysine mark is found at K66, K199, and K250.

It belongs to the peptidase M16 family. UQCRC2/QCR2 subfamily. As to quaternary structure, component of the ubiquinol-cytochrome c oxidoreductase (cytochrome b-c1 complex, complex III, CIII), a multisubunit enzyme composed of 11 subunits. The complex is composed of 3 respiratory subunits cytochrome b, cytochrome c1 and Rieske protein UQCRFS1, 2 core protein subunits UQCRC1/QCR1 and UQCRC2/QCR2, and 6 low-molecular weight protein subunits UQCRH/QCR6, UQCRB/QCR7, UQCRQ/QCR8, UQCR10/QCR9, UQCR11/QCR10 and subunit 9, the cleavage product of Rieske protein UQCRFS1. The complex exists as an obligatory dimer and forms supercomplexes (SCs) in the inner mitochondrial membrane with NADH-ubiquinone oxidoreductase (complex I, CI) and cytochrome c oxidase (complex IV, CIV), resulting in different assemblies (supercomplex SCI(1)III(2)IV(1) and megacomplex MCI(2)III(2)IV(2)). Interacts with RAB5IF. Interacts with STMP1.

Its subcellular location is the mitochondrion inner membrane. Functionally, component of the ubiquinol-cytochrome c oxidoreductase, a multisubunit transmembrane complex that is part of the mitochondrial electron transport chain which drives oxidative phosphorylation. The respiratory chain contains 3 multisubunit complexes succinate dehydrogenase (complex II, CII), ubiquinol-cytochrome c oxidoreductase (cytochrome b-c1 complex, complex III, CIII) and cytochrome c oxidase (complex IV, CIV), that cooperate to transfer electrons derived from NADH and succinate to molecular oxygen, creating an electrochemical gradient over the inner membrane that drives transmembrane transport and the ATP synthase. The cytochrome b-c1 complex catalyzes electron transfer from ubiquinol to cytochrome c, linking this redox reaction to translocation of protons across the mitochondrial inner membrane, with protons being carried across the membrane as hydrogens on the quinol. In the process called Q cycle, 2 protons are consumed from the matrix, 4 protons are released into the intermembrane space and 2 electrons are passed to cytochrome c. The 2 core subunits UQCRC1/QCR1 and UQCRC2/QCR2 are homologous to the 2 mitochondrial-processing peptidase (MPP) subunits beta-MPP and alpha-MPP respectively, and they seem to have preserved their MPP processing properties. May be involved in the in situ processing of UQCRFS1 into the mature Rieske protein and its mitochondrial targeting sequence (MTS)/subunit 9 when incorporated into complex III. The protein is Cytochrome b-c1 complex subunit 2, mitochondrial (UQCRC2) of Homo sapiens (Human).